We begin with the raw amino-acid sequence, 336 residues long: Immune-associated nucleotide-binding protein 13 (336 aa).

The region spanning lysine 15–arginine 221 is the AIG1-type G domain. The segment at glycine 24–serine 31 is G1. Residues glycine 24–alanine 32 and serine 45 each bind GTP. The G2 stretch occupies residues phenylalanine 51–glutamate 55. The G3 stretch occupies residues aspartate 73–glycine 76. Residues threonine 143 to aspartate 146 form a G4 region. A G5 region spans residues aspartate 179 to serine 181. Position 180 (asparagine 180) interacts with GTP. A coiled-coil region spans residues lysine 265–glutamate 328.

Belongs to the TRAFAC class TrmE-Era-EngA-EngB-Septin-like GTPase superfamily. AIG1/Toc34/Toc159-like paraseptin GTPase family. IAN subfamily. As to expression, expressed in pollen grains.

This is Immune-associated nucleotide-binding protein 13 from Arabidopsis thaliana (Mouse-ear cress).